The primary structure comprises 145 residues: Large ribosomal subunit protein uL13 (145 aa).

The protein belongs to the universal ribosomal protein uL13 family. In terms of assembly, part of the 50S ribosomal subunit.

Functionally, this protein is one of the early assembly proteins of the 50S ribosomal subunit, although it is not seen to bind rRNA by itself. It is important during the early stages of 50S assembly. This Bacillus cereus (strain G9842) protein is Large ribosomal subunit protein uL13.